Reading from the N-terminus, the 168-residue chain is Large ribosomal subunit protein uL16 (168 aa).

It belongs to the universal ribosomal protein uL16 family.

This chain is Large ribosomal subunit protein uL16, found in Thermofilum pendens (strain DSM 2475 / Hrk 5).